The primary structure comprises 424 residues: Tubulin-specific chaperone cofactor E-like protein (424 aa).

A phosphoserine mark is found at Ser-18 and Ser-41. 7 LRR repeats span residues 73–98 (CAHV…IVSN), 99–123 (VPQL…TCAG), 124–147 (SFSG…HMIL), 150–172 (LPDL…PSIC), 173–197 (CHSL…KLGV), 199–224 (FPSL…SLAR), and 226–250 (FPNL…KLNS). Residues 262–303 (IPLLQPYTTEERRKLVIARLPSVSKLNGSVVTDGEREDSERF) form the LRRCT domain. Residues 334–424 (AEVDLRPQSS…DKIYVESKTK (91 aa)) form the Ubiquitin-like domain. The stretch at 349–375 (HFNDQVEEMSIRLDQTVAELKKQLKTL) forms a coiled coil.

In terms of tissue distribution, abundantly expressed in testis, but is also present in several tissues at a much lower level.

The protein resides in the cytoplasm. It is found in the cytoskeleton. In terms of biological role, acts as a regulator of tubulin stability. The polypeptide is Tubulin-specific chaperone cofactor E-like protein (TBCEL) (Homo sapiens (Human)).